Consider the following 351-residue polypeptide: Phosphoribosylformylglycinamidine cyclo-ligase (351 aa).

It belongs to the AIR synthase family.

It is found in the cytoplasm. The enzyme catalyses 2-formamido-N(1)-(5-O-phospho-beta-D-ribosyl)acetamidine + ATP = 5-amino-1-(5-phospho-beta-D-ribosyl)imidazole + ADP + phosphate + H(+). The protein operates within purine metabolism; IMP biosynthesis via de novo pathway; 5-amino-1-(5-phospho-D-ribosyl)imidazole from N(2)-formyl-N(1)-(5-phospho-D-ribosyl)glycinamide: step 2/2. The polypeptide is Phosphoribosylformylglycinamidine cyclo-ligase (Azotobacter vinelandii (strain DJ / ATCC BAA-1303)).